Reading from the N-terminus, the 305-residue chain is tRNA dimethylallyltransferase (305 aa).

An ATP-binding site is contributed by 11-18 (GPTAVGKT). 13–18 (TAVGKT) contacts substrate. An interaction with substrate tRNA region spans residues 36-39 (DSMQ).

This sequence belongs to the IPP transferase family. In terms of assembly, monomer. Mg(2+) is required as a cofactor.

The enzyme catalyses adenosine(37) in tRNA + dimethylallyl diphosphate = N(6)-dimethylallyladenosine(37) in tRNA + diphosphate. Functionally, catalyzes the transfer of a dimethylallyl group onto the adenine at position 37 in tRNAs that read codons beginning with uridine, leading to the formation of N6-(dimethylallyl)adenosine (i(6)A). This Listeria monocytogenes serotype 4b (strain CLIP80459) protein is tRNA dimethylallyltransferase.